We begin with the raw amino-acid sequence, 206 residues long: Large ribosomal subunit protein uL4 (206 aa).

The interval G46–T77 is disordered. Positions H58 to G70 are enriched in basic residues.

The protein belongs to the universal ribosomal protein uL4 family. Part of the 50S ribosomal subunit.

Functionally, one of the primary rRNA binding proteins, this protein initially binds near the 5'-end of the 23S rRNA. It is important during the early stages of 50S assembly. It makes multiple contacts with different domains of the 23S rRNA in the assembled 50S subunit and ribosome. Its function is as follows. Forms part of the polypeptide exit tunnel. The polypeptide is Large ribosomal subunit protein uL4 (Polaromonas sp. (strain JS666 / ATCC BAA-500)).